Reading from the N-terminus, the 379-residue chain is Probable 3-phenylpropionic acid transporter (379 aa).

Residues 1-4 (MVLQ) lie on the Cytoplasmic side of the membrane. Residues 5–31 (STRWLALGYFTYFFSYGIFLPFWSVWL) form a helical membrane-spanning segment. Residues 32 to 37 (KGIGLT) are Periplasmic-facing. Residues 38–66 (PETIGLLLGAGLVARFLGSLLIAPRVSDP) traverse the membrane as a helical segment. The Cytoplasmic segment spans residues 67–70 (SRLI). Residues 71–96 (SALRVLALLTLLFAVAFWAGAHVAWL) traverse the membrane as a helical segment. Residues 97 to 100 (MLVM) are Periplasmic-facing. A helical membrane pass occupies residues 101–118 (IGFNLFFSPLVPLTDALA). Topologically, residues 119-129 (NTWQKQFPLDY) are cytoplasmic. A helical transmembrane segment spans residues 130 to 152 (GKVRLWGSVAFVIGSALTGKLVT). The Periplasmic portion of the chain corresponds to 153–155 (MFD). A helical membrane pass occupies residues 156-175 (YRVILALLTLGVASMLLGFL). Residues 176–207 (IRPTIQPQGASRQQESTGWSAWLALVRQNWRF) lie on the Cytoplasmic side of the membrane. The helical transmembrane segment at 208-227 (LACVCLLQGAHAAYYGFSAI) threads the bilayer. The Periplasmic portion of the chain corresponds to 228–231 (YWQA). Residues 232-256 (AGYSASAVGYLWSLGVVAEVIIFAL) traverse the membrane as a helical segment. Topologically, residues 257-266 (SNKLFRRCSA) are cytoplasmic. Residues 267 to 286 (RDMLLISAICGVVRWGIMGA) form a helical membrane-spanning segment. Residues 287–289 (TTA) lie on the Periplasmic side of the membrane. The helical transmembrane segment at 290-312 (LPWLIVVQILHCGTFTVCHLAAM) threads the bilayer. Over 313–323 (RYIAARQGSEV) the chain is Cytoplasmic. A helical transmembrane segment spans residues 324-351 (IRLQAVYSAVAMGGSIAIMTVFAGFLYQ). Over 352-354 (YLG) the chain is Periplasmic. The chain crosses the membrane as a helical span at residues 355–375 (HGVFWVMALVALPAMFLRPKV). At 376-379 (VPSC) the chain is on the cytoplasmic side.

Belongs to the major facilitator superfamily. Phenyl propionate permease (PPP) (TC 2.A.1.27) family.

It is found in the cell inner membrane. Probable permease involved in the uptake of 3-phenylpropionic acid. This chain is Probable 3-phenylpropionic acid transporter (hcaT), found in Escherichia coli (strain K12).